A 129-amino-acid chain; its full sequence is 3-aminoacrylate deaminase RutC (129 aa).

It belongs to the RutC family.

The catalysed reaction is (Z)-3-aminoacrylate + H2O + H(+) = 3-oxopropanoate + NH4(+). Involved in pyrimidine catabolism. Catalyzes the deamination of 3-aminoacrylate to malonic semialdehyde, a reaction that can also occur spontaneously. RutC may facilitate the reaction and modulate the metabolic fitness, rather than catalyzing essential functions. This chain is 3-aminoacrylate deaminase RutC, found in Caulobacter vibrioides (strain ATCC 19089 / CIP 103742 / CB 15) (Caulobacter crescentus).